The sequence spans 249 residues: MLLIPAIDLKDGKCVRLKQGDMNDSTTFGEDPAAMARRWVDAGARRLHLVDLNGAFAGKPVNEGAIKSIIAAVGGDIPIQLGGGIRDLDTIERYLDDGLSYVIIGTAAVKNPGFLRDACTAFGGHIIVGLDARDGKVATDGWSKLTGHEVVDLARKFQDYGVEGVIYTDIGRDGMLSGINIEATVKLAQALTIPVIASGGLSNMADIDALCAVEHEGVDGVICGRSIYSGDLDFAAGQKRADELNGGRV.

The Proton acceptor role is filled by aspartate 8. Aspartate 131 serves as the catalytic Proton donor.

This sequence belongs to the HisA/HisF family.

It localises to the cytoplasm. It catalyses the reaction 1-(5-phospho-beta-D-ribosyl)-5-[(5-phospho-beta-D-ribosylamino)methylideneamino]imidazole-4-carboxamide = 5-[(5-phospho-1-deoxy-D-ribulos-1-ylimino)methylamino]-1-(5-phospho-beta-D-ribosyl)imidazole-4-carboxamide. It functions in the pathway amino-acid biosynthesis; L-histidine biosynthesis; L-histidine from 5-phospho-alpha-D-ribose 1-diphosphate: step 4/9. This is 1-(5-phosphoribosyl)-5-[(5-phosphoribosylamino)methylideneamino] imidazole-4-carboxamide isomerase from Leptothrix cholodnii (strain ATCC 51168 / LMG 8142 / SP-6) (Leptothrix discophora (strain SP-6)).